The following is a 1033-amino-acid chain: Isoleucine--tRNA ligase 2 (1033 aa).

A 'HIGH' region motif is present at residues 47 to 57; that stretch reads PTANGLPHVGH. The 'KMSKS' region signature appears at 590-594; that stretch reads KMSKS. K593 is an ATP binding site.

It belongs to the class-I aminoacyl-tRNA synthetase family. IleS type 2 subfamily. In terms of assembly, monomer. It depends on Zn(2+) as a cofactor.

The protein resides in the cytoplasm. The catalysed reaction is tRNA(Ile) + L-isoleucine + ATP = L-isoleucyl-tRNA(Ile) + AMP + diphosphate. Its function is as follows. Catalyzes the attachment of isoleucine to tRNA(Ile). As IleRS can inadvertently accommodate and process structurally similar amino acids such as valine, to avoid such errors it has two additional distinct tRNA(Ile)-dependent editing activities. One activity is designated as 'pretransfer' editing and involves the hydrolysis of activated Val-AMP. The other activity is designated 'posttransfer' editing and involves deacylation of mischarged Val-tRNA(Ile). The polypeptide is Isoleucine--tRNA ligase 2 (Bacillus cereus (strain ZK / E33L)).